The chain runs to 169 residues: Lutropin/choriogonadotropin subunit beta (169 aa).

Positions 1-20 (MEMLQGLLLWMLLSVGGVWA) are cleaved as a signal peptide. 6 disulfides stabilise this stretch: Cys29/Cys77, Cys43/Cys92, Cys46/Cys130, Cys54/Cys108, Cys58/Cys110, and Cys113/Cys120. N-linked (GlcNAc...) asparagine glycosylation is present at Asn33. Residues 131–169 (APQTSSSCKDPPSQPLTSTSTPTPGASRRSSHPLPINTS) are disordered. Low complexity predominate over residues 145–158 (PLTSTSTPTPGASR).

The protein belongs to the glycoprotein hormones subunit beta family. Heterodimer of a common alpha chain and a unique beta chain which confers biological specificity to thyrotropin, lutropin, follitropin and gonadotropin.

The protein resides in the secreted. Functionally, promotes spermatogenesis and ovulation by stimulating the testes and ovaries to synthesize steroids. This chain is Lutropin/choriogonadotropin subunit beta (LHB), found in Equus asinus (Donkey).